Reading from the N-terminus, the 227-residue chain is Ribose-5-phosphate isomerase A (227 aa).

Substrate is bound by residues 26–29 (TGST), 82–85 (DGAD), and 95–98 (KGGG). Glu-104 (proton acceptor) is an active-site residue. Lys-122 serves as a coordination point for substrate.

The protein belongs to the ribose 5-phosphate isomerase family. As to quaternary structure, homodimer.

The catalysed reaction is aldehydo-D-ribose 5-phosphate = D-ribulose 5-phosphate. It functions in the pathway carbohydrate degradation; pentose phosphate pathway; D-ribose 5-phosphate from D-ribulose 5-phosphate (non-oxidative stage): step 1/1. Catalyzes the reversible conversion of ribose-5-phosphate to ribulose 5-phosphate. The polypeptide is Ribose-5-phosphate isomerase A (Streptococcus pneumoniae serotype 2 (strain D39 / NCTC 7466)).